A 164-amino-acid polypeptide reads, in one-letter code: MAEERDAEGTEALIAELHKKIKDAFEVFDHESNNTVDVREIGTIIRSLGCCPTEGELHDFIAEIEEEEPTGYIRFEKFIPVMTRALVERRYRPAAEDILLRAFEVLDPAKRGFLTKDELVKYMTEEGEPFSQEEMEEMLSAAIDPESNTINYRDYITMMVVDEN.

2 consecutive EF-hand domains span residues 16-51 (ELHKKIKDAFEVFDHESNNTVDVREIGTIIRSLGCC) and 94-129 (AAEDILLRAFEVLDPAKRGFLTKDELVKYMTEEGEP).

This sequence belongs to the DRC8 family. Component of the nexin-dynein regulatory complex (N-DRC).

The protein resides in the cytoplasm. It is found in the cytoskeleton. It localises to the flagellum axoneme. Component of the nexin-dynein regulatory complex (N-DRC), a key regulator of ciliary/flagellar motility which maintains the alignment and integrity of the distal axoneme and regulates microtubule sliding in motile axonemes. This Mus musculus (Mouse) protein is Dynein regulatory complex protein 8 (Efcab2).